Reading from the N-terminus, the 94-residue chain is Large ribosomal subunit protein bL25 (94 aa).

The protein belongs to the bacterial ribosomal protein bL25 family. In terms of assembly, part of the 50S ribosomal subunit; part of the 5S rRNA/L5/L18/L25 subcomplex. Contacts the 5S rRNA. Binds to the 5S rRNA independently of L5 and L18.

This is one of the proteins that binds to the 5S RNA in the ribosome where it forms part of the central protuberance. This chain is Large ribosomal subunit protein bL25, found in Escherichia coli O157:H7.